The following is a 178-amino-acid chain: Fatty-acid and retinol-binding protein 1 (178 aa).

An N-terminal signal peptide occupies residues 1-16; it reads MYHQLILMALIGVIMA. Coiled-coil stretches lie at residues 67–89 and 122–154; these read DAALEALKNKSDKLYQKAVELRN and QKLDMEKLKQAARDIIAKYEALNEETKEELKAT.

Belongs to the fatty-acid and retinol-binding protein (FARBP) family. Post-translationally, not glycosylated.

The protein resides in the secreted. Functionally, binds retinol and different fatty acids. The sequence is that of Fatty-acid and retinol-binding protein 1 from Litomosoides sigmodontis (Filarial nematode worm).